Reading from the N-terminus, the 103-residue chain is Large ribosomal subunit protein bL21 (103 aa).

It belongs to the bacterial ribosomal protein bL21 family. As to quaternary structure, part of the 50S ribosomal subunit. Contacts protein L20.

In terms of biological role, this protein binds to 23S rRNA in the presence of protein L20. The sequence is that of Large ribosomal subunit protein bL21 from Mycobacterium leprae (strain Br4923).